The sequence spans 595 residues: Elongation factor 4 (595 aa).

Residues 2–184 form the tr-type G domain; that stretch reads KNIRNFSIIA…QIVERIPTPK (183 aa). Residues 14–19 and 131–134 each bind GTP; these read DHGKST and NKID.

It belongs to the TRAFAC class translation factor GTPase superfamily. Classic translation factor GTPase family. LepA subfamily.

It localises to the cell inner membrane. The enzyme catalyses GTP + H2O = GDP + phosphate + H(+). Functionally, required for accurate and efficient protein synthesis under certain stress conditions. May act as a fidelity factor of the translation reaction, by catalyzing a one-codon backward translocation of tRNAs on improperly translocated ribosomes. Back-translocation proceeds from a post-translocation (POST) complex to a pre-translocation (PRE) complex, thus giving elongation factor G a second chance to translocate the tRNAs correctly. Binds to ribosomes in a GTP-dependent manner. The protein is Elongation factor 4 of Vesicomyosocius okutanii subsp. Calyptogena okutanii (strain HA).